A 203-amino-acid polypeptide reads, in one-letter code: MSIKYVATSKLPTPWGVFAMHGFEDTETSKEHVALTFGTLSSDAPVLGRIHSECLTGDALFSLRCDCGFQLQTAMQNIAETGSGFILYLRQEGRGIGLLNKIRAYELQDKGANTVEANEQLGFPADMRKYDMIQPMLEQIGVKHVRLMTNNPRKVKAMKEIGIEVVERVPLQVGKNRYNEAYLKTKSTELGHMMSEYHFTDEE.

49-53 contributes to the GTP binding site; sequence RIHSE. Zn(2+) is bound by residues Cys-54, Cys-65, and Cys-67. GTP is bound by residues Gln-70, 92–94, and Thr-114; that span reads EGR. Asp-126 functions as the Proton acceptor in the catalytic mechanism. Arg-128 functions as the Nucleophile in the catalytic mechanism. Residues Thr-149 and Lys-154 each contribute to the GTP site.

The protein belongs to the GTP cyclohydrolase II family. It depends on Zn(2+) as a cofactor.

The enzyme catalyses GTP + 4 H2O = 2,5-diamino-6-hydroxy-4-(5-phosphoribosylamino)-pyrimidine + formate + 2 phosphate + 3 H(+). The protein operates within cofactor biosynthesis; riboflavin biosynthesis; 5-amino-6-(D-ribitylamino)uracil from GTP: step 1/4. Its function is as follows. Catalyzes the conversion of GTP to 2,5-diamino-6-ribosylamino-4(3H)-pyrimidinone 5'-phosphate (DARP), formate and pyrophosphate. This chain is GTP cyclohydrolase-2, found in Shewanella sp. (strain ANA-3).